The primary structure comprises 237 residues: RNA polymerase sigma-28 factor (237 aa).

Positions 1–19 (MSLFAAIGYMVREVFVFVS) are excised as a propeptide. Positions 77–90 (DLISIGTIGLIKAI) match the Polymerase core binding motif. The segment at residues 197–206 (QREIAKALGI) is a DNA-binding region (H-T-H motif).

The protein belongs to the sigma-70 factor family. Proteolytically cleaved in the N-terminus probably by a SpoIIGA homolog to yield the active peptide.

Functionally, sigma factors are initiation factors that promote the attachment of RNA polymerase to specific initiation sites and are then released. This sigma factor directs the transcription of crystal protein genes, a sporulation-regulated event. The protein is RNA polymerase sigma-28 factor (sigK) of Bacillus thuringiensis subsp. kurstaki.